Reading from the N-terminus, the 440-residue chain is MENILKLIARYPLVEDLVALKETTWFNPGATSLAQGLPYVGLTEQDVNAAHDRLARFAPYLAKAFPQTAAAGGIIESDVVAIPAMQKRLEKEYGQTIDGEMLLKKDSHLAISGSIKARGGIYEVLTHAEKLALEAGLLTTDDDYSVLLSPEFKQFFSQYSIAVGSTGNLGLSIGIMSACIGFKVTVHMSADARAWKKAKLRSHGVTVVEYEDDYGVAVEQGRKAAQSDPNCFFIDDENSRTLFLGYAVAGQRLKAQFAQQGRVVDASHPLFVYLPCGVGGGPGGVAFGLKLAFGDNVHCFFAEPTHSPCMLLGVYTGLHDAISVQDIGIDNLTAADGLAVGRASGFVGRAMERLLDGLYTLDDQTMYDMLGWLAQEEGIRLEPSALAGMAGPQRICASVAYQQRHGFSQTQLGNATHLIWATGGGMVPEDEMEQYLAKGR.

Lysine 116 is subject to N6-(pyridoxal phosphate)lysine.

The protein belongs to the serine/threonine dehydratase family. DsdA subfamily. In terms of assembly, monomer. Pyridoxal 5'-phosphate serves as cofactor.

It carries out the reaction D-serine = pyruvate + NH4(+). This chain is D-serine dehydratase, found in Salmonella typhi.